The chain runs to 134 residues: Small ribosomal subunit protein uS9 (134 aa).

A disordered region spans residues 109–134 (KGDPRRKEPKKFGGRGARARRQKSYR). Residues 115–134 (KEPKKFGGRGARARRQKSYR) show a composition bias toward basic residues.

The protein belongs to the universal ribosomal protein uS9 family.

The protein is Small ribosomal subunit protein uS9 of Methanopyrus kandleri (strain AV19 / DSM 6324 / JCM 9639 / NBRC 100938).